The primary structure comprises 511 residues: Maturase K (511 aa).

It belongs to the intron maturase 2 family. MatK subfamily.

The protein localises to the plastid. The protein resides in the chloroplast. In terms of biological role, usually encoded in the trnK tRNA gene intron. Probably assists in splicing its own and other chloroplast group II introns. This Brachypodium sylvaticum (False brome) protein is Maturase K.